A 389-amino-acid polypeptide reads, in one-letter code: Succinate--CoA ligase [ADP-forming] subunit beta (389 aa).

The region spanning 9–236 is the ATP-grasp domain; the sequence is RDMFEAHGVP…KDSADPLEAK (228 aa). ATP contacts are provided by residues lysine 45, 52–54, alanine 94, and glutamate 99; that span reads GRG. Residues asparagine 191 and aspartate 205 each contribute to the Mg(2+) site. Residues asparagine 256 and 318–320 each bind substrate; that span reads GIT.

This sequence belongs to the succinate/malate CoA ligase beta subunit family. In terms of assembly, heterotetramer of two alpha and two beta subunits. Mg(2+) serves as cofactor.

The catalysed reaction is succinate + ATP + CoA = succinyl-CoA + ADP + phosphate. It catalyses the reaction GTP + succinate + CoA = succinyl-CoA + GDP + phosphate. It functions in the pathway carbohydrate metabolism; tricarboxylic acid cycle; succinate from succinyl-CoA (ligase route): step 1/1. Succinyl-CoA synthetase functions in the citric acid cycle (TCA), coupling the hydrolysis of succinyl-CoA to the synthesis of either ATP or GTP and thus represents the only step of substrate-level phosphorylation in the TCA. The beta subunit provides nucleotide specificity of the enzyme and binds the substrate succinate, while the binding sites for coenzyme A and phosphate are found in the alpha subunit. The polypeptide is Succinate--CoA ligase [ADP-forming] subunit beta (Renibacterium salmoninarum (strain ATCC 33209 / DSM 20767 / JCM 11484 / NBRC 15589 / NCIMB 2235)).